A 390-amino-acid chain; its full sequence is Histamine H4 receptor (390 aa).

Topologically, residues 1–19 are extracellular; it reads MPDTNSTINLSLSTRVTLA. 2 N-linked (GlcNAc...) asparagine glycosylation sites follow: N5 and N9. The chain crosses the membrane as a helical span at residues 20–40; that stretch reads FFMSLVAFAIMLGNALVILAF. Residues 41–52 lie on the Cytoplasmic side of the membrane; it reads VVDKNLRHRSSY. A helical transmembrane segment spans residues 53 to 73; the sequence is FFLNLAISDFFVGVISIPLYI. Residues 74-87 lie on the Extracellular side of the membrane; it reads PHTLFEWDFGKEIC. Residues C87 and C164 are joined by a disulfide bond. A helical membrane pass occupies residues 88-108; sequence VFWLTTDYLLCTASVYNIVLI. The Cytoplasmic portion of the chain corresponds to 109–131; that stretch reads SYDRYLSVSNAVSYRTQHTGVLK. A helical membrane pass occupies residues 132 to 152; sequence IVTLMVAVWVLAFLVNGPMIL. At 153-172 the chain is on the extracellular side; it reads VSESWKDEGSECEPGFFSEW. Residues 173–193 form a helical membrane-spanning segment; sequence YILAITSFLEFVIPVILVAYF. Residues 194-304 lie on the Cytoplasmic side of the membrane; sequence NMNIYWSLWK…LLRARRLAKS (111 aa). A helical transmembrane segment spans residues 305–325; that stretch reads LAILLGVFAVCWAPYSLFTIV. The Extracellular portion of the chain corresponds to 326–341; that stretch reads LSFYSSATGPKSVWYR. The helical transmembrane segment at 342 to 362 threads the bilayer; that stretch reads IAFWLQWFNSFVNPLLYPLCH. Residues 363-390 lie on the Cytoplasmic side of the membrane; it reads KRFQKAFLKIFCIKKQPLPSQHSRSVSS.

It belongs to the G-protein coupled receptor 1 family. As to quaternary structure, interacts with TSPAN4. Expressed primarily in the bone marrow and eosinophils. Shows preferential distribution in cells of immunological relevance such as T-cells, dendritic cells, monocytes, mast cells, neutrophils. Also expressed in a wide variety of peripheral tissues, including the heart, kidney, liver, lung, pancreas, skeletal muscle, prostate, small intestine, spleen, testis, colon, fetal liver and lymph node.

Its subcellular location is the cell membrane. In terms of biological role, the H4 subclass of histamine receptors could mediate the histamine signals in peripheral tissues. Displays a significant level of constitutive activity (spontaneous activity in the absence of agonist). The sequence is that of Histamine H4 receptor (HRH4) from Homo sapiens (Human).